Reading from the N-terminus, the 398-residue chain is cAMP-dependent protein kinase, catalytic subunit-like (398 aa).

A Protein kinase domain is found at 90–344 (LERIITIGKG…TQDVKDHKWF (255 aa)). ATP-binding positions include 96-104 (IGKGTFGRV) and Lys-119. Asp-213 (proton acceptor) is an active-site residue. In terms of domain architecture, AGC-kinase C-terminal spans 345-398 (EKVNWDDTLHLRVEPPIVPTLYHPGDTGNFDDYEEDTTGGPLCSQRDRDLFAEW).

This sequence belongs to the protein kinase superfamily. Ser/Thr protein kinase family. cAMP subfamily.

The enzyme catalyses L-seryl-[protein] + ATP = O-phospho-L-seryl-[protein] + ADP + H(+). It carries out the reaction L-threonyl-[protein] + ATP = O-phospho-L-threonyl-[protein] + ADP + H(+). The protein is cAMP-dependent protein kinase, catalytic subunit-like of Caenorhabditis elegans.